Reading from the N-terminus, the 179-residue chain is UPF0303 protein P4H10.12 (179 aa).

The protein belongs to the UPF0303 family.

The polypeptide is UPF0303 protein P4H10.12 (Schizosaccharomyces pombe (strain 972 / ATCC 24843) (Fission yeast)).